Consider the following 389-residue polypeptide: Succinate--CoA ligase [ADP-forming] subunit beta (389 aa).

The ATP-grasp domain maps to 9 to 236; that stretch reads KELFAKHEVP…KDATDPLELK (228 aa). Residues K45, 52 to 54, S94, and E99 each bind ATP; that span reads GRG. 2 residues coordinate Mg(2+): N191 and D205. Substrate is bound by residues N256 and 318-320; that span reads GIT.

Belongs to the succinate/malate CoA ligase beta subunit family. Heterotetramer of two alpha and two beta subunits. The cofactor is Mg(2+).

It catalyses the reaction succinate + ATP + CoA = succinyl-CoA + ADP + phosphate. The catalysed reaction is GTP + succinate + CoA = succinyl-CoA + GDP + phosphate. The protein operates within carbohydrate metabolism; tricarboxylic acid cycle; succinate from succinyl-CoA (ligase route): step 1/1. Succinyl-CoA synthetase functions in the citric acid cycle (TCA), coupling the hydrolysis of succinyl-CoA to the synthesis of either ATP or GTP and thus represents the only step of substrate-level phosphorylation in the TCA. The beta subunit provides nucleotide specificity of the enzyme and binds the substrate succinate, while the binding sites for coenzyme A and phosphate are found in the alpha subunit. The sequence is that of Succinate--CoA ligase [ADP-forming] subunit beta from Rhodococcus jostii (strain RHA1).